We begin with the raw amino-acid sequence, 105 residues long: U2-lycotoxin-Ls1c (105 aa).

The first 17 residues, Met1–Ser17, serve as a signal peptide directing secretion. A propeptide spanning residues Phe18–Arg41 is cleaved from the precursor. Disulfide bonds link Cys51-Cys67, Cys58-Cys97, Cys60-Cys83, and Cys69-Cys81.

The protein belongs to the neurotoxin 04 (omega-agtx) family. 01 (type I omega-agtx) subfamily. As to expression, expressed by the venom gland.

The protein resides in the secreted. Its function is as follows. Insecticidal to house crickets. It induces an excitatory slow-onset impact that leads to irreversible spastic paralysis. It also modifies human voltage-gated potassium channel Kv1.5/KCNA5. Most likely, it binds to the voltage-sensing domain of the channel, suggesting it does not block the pore but prevents its opening at physiological membrane potentials. The recombinant peptide binds to the channel in an irreversible manner and slows down the hKv1.5 current activation kinetics. It is not toxic to mice, when intracranially injected (at 0.5 ug/g mouse). The protein is U2-lycotoxin-Ls1c of Lycosa singoriensis (Wolf spider).